The chain runs to 590 residues: Peroxisomal targeting signal receptor (590 aa).

Residue Cys6 forms a Glycyl cysteine thioester (Cys-Gly) (interchain with G-Cter in ubiquitin) linkage. The tract at residues 7-29 (SVGSNPLAQLNKHAQGQGSSLSN) is amphipathic helix 1 (AH1). Residue Lys18 forms a Glycyl lysine isopeptide (Lys-Gly) (interchain with G-Cter in ubiquitin) linkage. Positions 18 to 30 (KHAQGQGSSLSNT) are enriched in polar residues. Positions 18–45 (KHAQGQGSSLSNTHVRHSGGVSGSNVFR) are disordered. The segment at 56–74 (RQQLNSFMSQPMRLGEDKM) is amphipathic helix 2 (AH2). Short sequence motifs (wxxxF/Y motif) lie at residues 108–112 (WTREF), 139–143 (WKFRY), and 178–182 (WNDKF). The tract at residues 227 to 243 (FQEVWDSIQQDTEEMLS) is amphipathic helix 4 (AH4). TPR repeat units lie at residues 285–319 (NPNA…DPKH), 320–353 (VDAW…DPNN), 424–457 (PDIQ…NPND), 459–491 (LMWN…KPSF), and 493–525 (RARY…HDVE).

This sequence belongs to the peroxisomal targeting signal receptor family. Interacts (via WxxxF/Y and LVxEF motifs) with PEX14; promoting translocation through the PEX13-PEX14 docking complex. Post-translationally, monoubiquitinated at Cys-6 by PEX2 during PEX5 passage through the retrotranslocation channel: monoubiquitination acts as a signal for PEX5 extraction and is required for proper export from peroxisomes and recycling. When PEX5 recycling is compromised, polyubiquitinated at Lys-18 by PEX10 during its passage through the retrotranslocation channel, leading to its degradation.

The protein localises to the cytoplasm. It is found in the cytosol. It localises to the peroxisome matrix. Functionally, receptor that mediates peroxisomal import of proteins containing a C-terminal PTS1-type tripeptide peroxisomal targeting signal (SKL-type). Binds to cargo proteins containing a PTS1 peroxisomal targeting signal in the cytosol, and translocates them into the peroxisome matrix by passing through the PEX13-PEX14 docking complex along with cargo proteins. PEX5 receptor is then retrotranslocated into the cytosol, leading to release of bound cargo in the peroxisome matrix, and reset for a subsequent peroxisome import cycle. The chain is Peroxisomal targeting signal receptor (PEX5) from Candida glabrata (strain ATCC 2001 / BCRC 20586 / JCM 3761 / NBRC 0622 / NRRL Y-65 / CBS 138) (Yeast).